The chain runs to 216 residues: MSVAIVDYGSGNLHSAAKAFERAARSMENPEPILVTRDPDQVFRADRVVLPGVGAFADCRKGLDSIDGMVQALNETVRDKARPFFGICVGMQLMATRGKEHVTTDGLNWIAGDVVKIAPDREDLKIPHMGWNTLDPVREHPVLEKLPLGPKGLHAYFVHSFHLAAEHEGDVLARADYGGPVTAVVGKDTAIGTQFHPEKSQRFGLALISNFLKWKP.

The region spanning 2-216 (SVAIVDYGSG…LISNFLKWKP (215 aa)) is the Glutamine amidotransferase type-1 domain. The active-site Nucleophile is the C88. Residues H196 and E198 contribute to the active site.

In terms of assembly, heterodimer of HisH and HisF.

Its subcellular location is the cytoplasm. It catalyses the reaction 5-[(5-phospho-1-deoxy-D-ribulos-1-ylimino)methylamino]-1-(5-phospho-beta-D-ribosyl)imidazole-4-carboxamide + L-glutamine = D-erythro-1-(imidazol-4-yl)glycerol 3-phosphate + 5-amino-1-(5-phospho-beta-D-ribosyl)imidazole-4-carboxamide + L-glutamate + H(+). The enzyme catalyses L-glutamine + H2O = L-glutamate + NH4(+). The protein operates within amino-acid biosynthesis; L-histidine biosynthesis; L-histidine from 5-phospho-alpha-D-ribose 1-diphosphate: step 5/9. In terms of biological role, IGPS catalyzes the conversion of PRFAR and glutamine to IGP, AICAR and glutamate. The HisH subunit catalyzes the hydrolysis of glutamine to glutamate and ammonia as part of the synthesis of IGP and AICAR. The resulting ammonia molecule is channeled to the active site of HisF. This chain is Imidazole glycerol phosphate synthase subunit HisH, found in Rhodopseudomonas palustris (strain ATCC BAA-98 / CGA009).